We begin with the raw amino-acid sequence, 358 residues long: MEIAALVSGGVDSSVVVHQLKEAGYDPTIFYIRIGMEDKDGYIDCPAEEDIEITSYIARKYGCRFEIVSLHDEYWDRVVSYTIESVKRGLTPNPDMMCNKYIKFGCFEEKWGKDFDKIATGHYATTTEIDGKTWLSTAKDPVKDQTDFLGQITRLQIQKLMFPIGHLMKSEVRAIAEAQKLPSAKRKDSQGICFLGKINYNDFIERYLGKRPGKIVELETGKVLGKHNGYWFHTIGQRKGLGLSGGPWFVIQKDIKRNIIYVSNGYDPETQYGKVINMQGFDFITEDPWGEFEGEKEITFKIRHTPEFTHGYIRRIGDLYRVESDEKIQGIAPGQYSVIYDKDHHLCLGSGMIIDETK.

Residues Leu-6–Ser-13 and Ile-32 contribute to the ATP site. The segment at Asn-93–Asp-95 is interaction with target base in tRNA. Cys-98 (nucleophile) is an active-site residue. The cysteines at positions 98 and 193 are disulfide-linked. Gly-121 is an ATP binding site. An interaction with tRNA region spans residues Lys-143 to Gln-145. The active-site Cysteine persulfide intermediate is the Cys-193.

This sequence belongs to the MnmA/TRMU family.

Its subcellular location is the cytoplasm. The enzyme catalyses S-sulfanyl-L-cysteinyl-[protein] + uridine(34) in tRNA + AH2 + ATP = 2-thiouridine(34) in tRNA + L-cysteinyl-[protein] + A + AMP + diphosphate + H(+). Its function is as follows. Catalyzes the 2-thiolation of uridine at the wobble position (U34) of tRNA, leading to the formation of s(2)U34. The protein is tRNA-specific 2-thiouridylase MnmA of Parabacteroides distasonis (strain ATCC 8503 / DSM 20701 / CIP 104284 / JCM 5825 / NCTC 11152).